The sequence spans 720 residues: NADH-ubiquinone oxidoreductase 78 kDa subunit, mitochondrial (720 aa).

The transit peptide at 1–23 (MNSIKSHILRSSKRYISASSKRL) directs the protein to the mitochondrion. The 2Fe-2S ferredoxin-type domain maps to 24 to 102 (AEVEVTVDGR…GMVVHTDSER (79 aa)). The [2Fe-2S] cluster site is built by Cys-58, Cys-69, Cys-72, and Cys-86. In terms of domain architecture, 4Fe-4S His(Cys)3-ligated-type spans 102–141 (RIKKAREGVTEMLLENHPLDCPVCDQGGECDLQEQSQRYG). The region spanning 241-297 (LKRTETIDVLDAVGSNIRVDTRGIEVMRVLPRLNDDVNEEWISDKTRFACDGLKTQR) is the 4Fe-4S Mo/W bis-MGD-type domain.

It belongs to the complex I 75 kDa subunit family. In terms of assembly, core subunit of respiratory chain NADH dehydrogenase (Complex I) which is composed of 45 different subunits. This is the largest subunit of complex I and it is a component of the iron-sulfur (IP) fragment of the enzyme. [2Fe-2S] cluster is required as a cofactor. It depends on [4Fe-4S] cluster as a cofactor.

The protein localises to the mitochondrion. It catalyses the reaction a ubiquinone + NADH + 5 H(+)(in) = a ubiquinol + NAD(+) + 4 H(+)(out). Core subunit of the mitochondrial membrane respiratory chain NADH dehydrogenase (Complex I) which catalyzes electron transfer from NADH through the respiratory chain, using ubiquinone as an electron acceptor. Essential for catalysing the entry and efficient transfer of electrons within complex I. Plays a key role in the assembly and stability of complex I and participates in the association of complex I with ubiquinol-cytochrome reductase complex (Complex III) to form supercomplexes. Plays a role in cell wall integrity and is involved in osmotic and oxidative resistance, yeast to hypha transition, and the ability to damage and invade oral epithelial cells. The polypeptide is NADH-ubiquinone oxidoreductase 78 kDa subunit, mitochondrial (Candida albicans (strain SC5314 / ATCC MYA-2876) (Yeast)).